The following is a 306-amino-acid chain: UDP-N-acetylenolpyruvoylglucosamine reductase (306 aa).

In terms of domain architecture, FAD-binding PCMH-type spans 34 to 199 (KSGGAAEWLF…VAATFRGHAE (166 aa)). Residue R179 is part of the active site. Residues 215–234 (REASQPLRSRTGGSTFKNPQ) are disordered. A compositionally biased stretch (polar residues) spans 220-232 (PLRSRTGGSTFKN). S228 (proton donor) is an active-site residue. E298 is an active-site residue.

It belongs to the MurB family. FAD is required as a cofactor.

The protein localises to the cytoplasm. It carries out the reaction UDP-N-acetyl-alpha-D-muramate + NADP(+) = UDP-N-acetyl-3-O-(1-carboxyvinyl)-alpha-D-glucosamine + NADPH + H(+). It participates in cell wall biogenesis; peptidoglycan biosynthesis. Its function is as follows. Cell wall formation. The chain is UDP-N-acetylenolpyruvoylglucosamine reductase from Rhizorhabdus wittichii (strain DSM 6014 / CCUG 31198 / JCM 15750 / NBRC 105917 / EY 4224 / RW1) (Sphingomonas wittichii).